Here is a 331-residue protein sequence, read N- to C-terminus: Ornithine carbamoyltransferase, catabolic (331 aa).

Carbamoyl phosphate contacts are provided by residues S57–T60, Q82, R106, and H133–Q136. Residues N166, D230, and S234 to M235 contribute to the L-ornithine site. Carbamoyl phosphate-binding positions include C272 to L273 and R317.

It belongs to the aspartate/ornithine carbamoyltransferase superfamily. OTCase family.

It is found in the cytoplasm. It catalyses the reaction carbamoyl phosphate + L-ornithine = L-citrulline + phosphate + H(+). It functions in the pathway amino-acid degradation; L-arginine degradation via ADI pathway; carbamoyl phosphate from L-arginine: step 2/2. In terms of biological role, reversibly catalyzes the transfer of the carbamoyl group from carbamoyl phosphate (CP) to the N(epsilon) atom of ornithine (ORN) to produce L-citrulline. This Clostridium perfringens (strain ATCC 13124 / DSM 756 / JCM 1290 / NCIMB 6125 / NCTC 8237 / Type A) protein is Ornithine carbamoyltransferase, catabolic (arcB).